A 570-amino-acid polypeptide reads, in one-letter code: Protein NRT1/ PTR FAMILY 8.1 (570 aa).

Thr-98 carries the post-translational modification Phosphothreonine. The next 10 helical transmembrane spans lie at 99–119, 140–160, 182–202, 210–230, 329–349, 377–397, 414–434, 454–474, 494–514, and 537–557; these read IATF…SASV, AVFF…KPCV, FFNW…TVLV, WGWG…FFFF, IITL…YSQM, LFDT…IIPL, MGIG…LEVV, IFWQ…TFIG, LSLT…TVVM, and YFFY…LWIS.

The protein belongs to the major facilitator superfamily. Proton-dependent oligopeptide transporter (POT/PTR) (TC 2.A.17) family. In terms of tissue distribution, expressed in cotyledons, hypocotyls, leaves, roots, flowers, pistils and vascular tissue of sepals, anthers, carpels and funiculi. Not detected in seeds.

The protein localises to the cell membrane. Functionally, peptide transporter. Mediates the transport of di- and tripeptides. High affinity transporter with low selectivity. No transport of amino acids. In Arabidopsis thaliana (Mouse-ear cress), this protein is Protein NRT1/ PTR FAMILY 8.1 (NPF8.1).